The primary structure comprises 137 residues: Beta-synuclein (137 aa).

2 consecutive repeat copies span residues 20 to 30 (EKTKQGVTEAA) and 31 to 41 (EKTKEGVLYVG). Residues 20 to 67 (EKTKQGVTEAAEKTKEGVLYVGSKTKEGVVQGVASVAEKTKEQASHLG) are 4 X 11 AA tandem repeats of [EGS]-K-T-K-[EQ]-[GQ]-V-X(4). A 3; approximate repeat occupies 42–56 (SKTKEGVVQGVASVA). Repeat 4 spans residues 57–67 (EKTKEQASHLG). Residues 88 to 97 (EFPTDLKPEE) show a composition bias toward basic and acidic residues. The disordered stretch occupies residues 88 to 137 (EFPTDLKPEEVAQEAAEEPLIEPLMEPEGESYEDSPQEEYQEYEPEAKGP). Positions 98 to 131 (VAQEAAEEPLIEPLMEPEGESYEDSPQEEYQEYE) are enriched in acidic residues. The residue at position 118 (serine 118) is a Phosphoserine; by BARK1, CK2 and GRK5.

Belongs to the synuclein family. In terms of processing, phosphorylated. Phosphorylation by G-protein coupled receptor kinases (GRK) is more efficient than phosphorylation by CK1, CK2 and CaM-kinase II. As to expression, expressed specifically in brain.

It localises to the cytoplasm. May be involved in neuronal plasticity. This chain is Beta-synuclein (Sncb), found in Rattus norvegicus (Rat).